A 115-amino-acid polypeptide reads, in one-letter code: Large ribosomal subunit protein uL22c (115 aa).

This sequence belongs to the universal ribosomal protein uL22 family. As to quaternary structure, part of the 50S ribosomal subunit.

It localises to the plastid. The protein resides in the chloroplast. Its function is as follows. This protein binds specifically to 23S rRNA. Functionally, the globular domain of the protein is located near the polypeptide exit tunnel on the outside of the subunit, while an extended beta-hairpin is found that lines the wall of the exit tunnel in the center of the 70S ribosome. This is Large ribosomal subunit protein uL22c (rpl22) from Phaeodactylum tricornutum (strain CCAP 1055/1).